We begin with the raw amino-acid sequence, 215 residues long: Ribonuclease T (215 aa).

Residues 20 to 194 enclose the Exonuclease domain; the sequence is VVIDVETAGF…YDTERTAVLF (175 aa). Residues Asp23, Glu25, His181, and Asp186 each coordinate Mg(2+). Catalysis depends on His181, which acts as the Proton donor/acceptor.

This sequence belongs to the RNase T family. Homodimer. Requires Mg(2+) as cofactor.

In terms of biological role, trims short 3' overhangs of a variety of RNA species, leaving a one or two nucleotide 3' overhang. Responsible for the end-turnover of tRNA: specifically removes the terminal AMP residue from uncharged tRNA (tRNA-C-C-A). Also appears to be involved in tRNA biosynthesis. The chain is Ribonuclease T from Salmonella choleraesuis (strain SC-B67).